The chain runs to 292 residues: Sulfofructosephosphate aldolase (292 aa).

Lys193 (schiff-base intermediate with substrate) is an active-site residue.

This sequence belongs to the aldolase LacD family. Homotetramer.

It catalyses the reaction 6-deoxy-6-sulfo-D-fructose 1-phosphate = (2S)-3-sulfolactaldehyde + dihydroxyacetone phosphate. Functionally, cleaves 6-deoxy-6-sulfo-D-fructose 1-phosphate (SFP) to form dihydroxyacetone phosphate (DHAP) and 3-sulfolactaldehyde (SLA). The polypeptide is Sulfofructosephosphate aldolase (yihT) (Salmonella typhi).